Consider the following 488-residue polypeptide: Probable malate:quinone oxidoreductase (488 aa).

Belongs to the MQO family. Requires FAD as cofactor.

The catalysed reaction is (S)-malate + a quinone = a quinol + oxaloacetate. Its pathway is carbohydrate metabolism; tricarboxylic acid cycle; oxaloacetate from (S)-malate (quinone route): step 1/1. In Neisseria gonorrhoeae (strain ATCC 700825 / FA 1090), this protein is Probable malate:quinone oxidoreductase.